Consider the following 141-residue polypeptide: Hemoglobin subunit alpha (141 aa).

The region spanning 1–141 (VLSGEDKNNI…VSTVLTSKYR (141 aa)) is the Globin domain. A Phosphoserine modification is found at Ser3. An N6-succinyllysine mark is found at Lys7 and Lys11. Lys16 is subject to N6-acetyllysine; alternate. Lys16 carries the N6-succinyllysine; alternate modification. Phosphotyrosine is present on Tyr24. The residue at position 40 (Lys40) is an N6-succinyllysine. Ser49 carries the phosphoserine modification. His58 serves as a coordination point for O2. A heme b-binding site is contributed by His87. Ser102 is modified (phosphoserine). Thr108 is subject to Phosphothreonine. A phosphoserine mark is found at Ser124 and Ser131. Residues Thr134 and Thr137 each carry the phosphothreonine modification. Residue Ser138 is modified to Phosphoserine.

The protein belongs to the globin family. In terms of assembly, heterotetramer of two alpha chains and two beta chains. As to expression, red blood cells.

Its function is as follows. Involved in oxygen transport from the lung to the various peripheral tissues. Hemopressin acts as an antagonist peptide of the cannabinoid receptor CNR1. Hemopressin-binding efficiently blocks cannabinoid receptor CNR1 and subsequent signaling. The sequence is that of Hemoglobin subunit alpha (HBA) from Ondatra zibethicus (Muskrat).